The following is a 382-amino-acid chain: MKYISILGASGSIGTQTLDVIRAHPDEFRLAAASVGKNIEAARRLIAEFSPSLVAVADRDAYKVLYREYRGRTTIVYGEEGLIEAAVCPQADVVVTAVVGSVGLVPTLKAIEAGKAIALANKETLVVAGHLVMAAAKRRGVPLLPVDSEHSAIFQCLQGERMEHVDKLILTASGGSFRDKTRRELAHVTVEEALCHPNWSMGAKITIDSATMMNKGFEVIEAHWLFGLPYERIEVVLHRESIIHSLVQFRDTSVLAQLGTPDMRVPIQYALAYPKRLPLPSAKPLDFISLGALHFAPVDFDRYRCLRLAYEAGKRGGSLPTVLNAANEEAVAAFLAGRIPFLAIEEWIERALERHRPVSNPQLEDIREIDADARAYVRSLLS.

NADPH is bound by residues Ser-10, Gly-11, Ser-12, Ile-13, Gly-36, Lys-37, Asn-38, and Asn-121. 1-deoxy-D-xylulose 5-phosphate is bound at residue Lys-122. Glu-123 contacts NADPH. Asp-147 is a binding site for Mn(2+). 1-deoxy-D-xylulose 5-phosphate is bound by residues Ser-148, Glu-149, Ser-173, and His-196. Glu-149 provides a ligand contact to Mn(2+). Residue Gly-202 participates in NADPH binding. 1-deoxy-D-xylulose 5-phosphate contacts are provided by Ser-209, Asn-214, Lys-215, and Glu-218. Glu-218 is a binding site for Mn(2+).

Belongs to the DXR family. It depends on Mg(2+) as a cofactor. Requires Mn(2+) as cofactor.

The catalysed reaction is 2-C-methyl-D-erythritol 4-phosphate + NADP(+) = 1-deoxy-D-xylulose 5-phosphate + NADPH + H(+). Its pathway is isoprenoid biosynthesis; isopentenyl diphosphate biosynthesis via DXP pathway; isopentenyl diphosphate from 1-deoxy-D-xylulose 5-phosphate: step 1/6. Functionally, catalyzes the NADPH-dependent rearrangement and reduction of 1-deoxy-D-xylulose-5-phosphate (DXP) to 2-C-methyl-D-erythritol 4-phosphate (MEP). The sequence is that of 1-deoxy-D-xylulose 5-phosphate reductoisomerase from Geobacillus kaustophilus (strain HTA426).